The following is a 574-amino-acid chain: Acetolactate synthase isozyme 3 large subunit (574 aa).

A thiamine diphosphate-binding site is contributed by Glu51. FAD-binding positions include Arg153, 261–282 (HGTYEANMTMHNADVIFAVGVR), and 304–323 (DIDPTSISKTVTADIPIVGD). Positions 397–477 (QHQMFAALYY…VLVVNLNNRY (81 aa)) are thiamine pyrophosphate binding. Mg(2+)-binding residues include Asp448 and Asn475.

It belongs to the TPP enzyme family. Dimer of large and small chains. Mg(2+) is required as a cofactor. Requires thiamine diphosphate as cofactor.

It carries out the reaction 2 pyruvate + H(+) = (2S)-2-acetolactate + CO2. The protein operates within amino-acid biosynthesis; L-isoleucine biosynthesis; L-isoleucine from 2-oxobutanoate: step 1/4. It participates in amino-acid biosynthesis; L-valine biosynthesis; L-valine from pyruvate: step 1/4. With respect to regulation, sensitive to valine inhibition. The protein is Acetolactate synthase isozyme 3 large subunit (ilvI) of Escherichia coli (strain K12).